The primary structure comprises 352 residues: S-adenosylmethionine:tRNA ribosyltransferase-isomerase (352 aa).

This sequence belongs to the QueA family. In terms of assembly, monomer.

Its subcellular location is the cytoplasm. The enzyme catalyses 7-aminomethyl-7-carbaguanosine(34) in tRNA + S-adenosyl-L-methionine = epoxyqueuosine(34) in tRNA + adenine + L-methionine + 2 H(+). It participates in tRNA modification; tRNA-queuosine biosynthesis. Transfers and isomerizes the ribose moiety from AdoMet to the 7-aminomethyl group of 7-deazaguanine (preQ1-tRNA) to give epoxyqueuosine (oQ-tRNA). The chain is S-adenosylmethionine:tRNA ribosyltransferase-isomerase from Solibacter usitatus (strain Ellin6076).